The chain runs to 334 residues: Trans-3-hydroxy-L-proline dehydratase (334 aa).

Residue Cys91 is the Proton acceptor of the active site. Substrate contacts are provided by residues 92–93 (GH), Asp250, and 255–256 (GT).

This sequence belongs to the proline racemase family.

The enzyme catalyses trans-3-hydroxy-L-proline = 1-pyrroline-2-carboxylate + H2O. Its function is as follows. Catalyzes the dehydration of trans-3-hydroxy-L-proline (t3LHyp) to Delta(1)-pyrroline-2-carboxylate (Pyr2C). Is likely involved in a degradation pathway that converts t3LHyp to L-proline. Can also catalyze the epimerization of trans-4-hydroxy-L-proline (t4LHyp) to cis-4-hydroxy-D-proline (c4DHyp) in vitro. Displays no proline racemase activity. The protein is Trans-3-hydroxy-L-proline dehydratase of Bacillus thuringiensis subsp. konkukian (strain 97-27).